The sequence spans 113 residues: UPF0060 membrane protein Arth_4423 (113 aa).

The next 4 membrane-spanning stretches (helical) occupy residues 7–27 (VLLF…VWQA), 33–53 (AWWW…VATL), 62–82 (ILAA…MVFD), and 91–111 (VIGS…PRGT).

This sequence belongs to the UPF0060 family.

It is found in the cell membrane. This chain is UPF0060 membrane protein Arth_4423, found in Arthrobacter sp. (strain FB24).